A 292-amino-acid chain; its full sequence is Ribosomal protein L11 methyltransferase (292 aa).

The S-adenosyl-L-methionine site is built by T144, G165, D187, and N229.

It belongs to the methyltransferase superfamily. PrmA family.

It is found in the cytoplasm. The enzyme catalyses L-lysyl-[protein] + 3 S-adenosyl-L-methionine = N(6),N(6),N(6)-trimethyl-L-lysyl-[protein] + 3 S-adenosyl-L-homocysteine + 3 H(+). Methylates ribosomal protein L11. This chain is Ribosomal protein L11 methyltransferase, found in Pseudomonas fluorescens (strain ATCC BAA-477 / NRRL B-23932 / Pf-5).